The primary structure comprises 319 residues: Acetyl-coenzyme A carboxylase carboxyl transferase subunit alpha (319 aa).

The CoA carboxyltransferase C-terminal domain maps to 39-296 (EINRLRSKSI…KTQLLLDLTE (258 aa)).

It belongs to the AccA family. In terms of assembly, acetyl-CoA carboxylase is a heterohexamer composed of biotin carboxyl carrier protein (AccB), biotin carboxylase (AccC) and two subunits each of ACCase subunit alpha (AccA) and ACCase subunit beta (AccD).

The protein localises to the cytoplasm. It catalyses the reaction N(6)-carboxybiotinyl-L-lysyl-[protein] + acetyl-CoA = N(6)-biotinyl-L-lysyl-[protein] + malonyl-CoA. It functions in the pathway lipid metabolism; malonyl-CoA biosynthesis; malonyl-CoA from acetyl-CoA: step 1/1. In terms of biological role, component of the acetyl coenzyme A carboxylase (ACC) complex. First, biotin carboxylase catalyzes the carboxylation of biotin on its carrier protein (BCCP) and then the CO(2) group is transferred by the carboxyltransferase to acetyl-CoA to form malonyl-CoA. The sequence is that of Acetyl-coenzyme A carboxylase carboxyl transferase subunit alpha from Blochmanniella pennsylvanica (strain BPEN).